A 743-amino-acid polypeptide reads, in one-letter code: Serine-rich coiled-coil domain-containing protein 1 (743 aa).

Disordered regions lie at residues 1 to 125 and 156 to 175; these read MGDS…SRNK and KSEG…SVKQ. Residues 29–56 show a composition bias toward low complexity; it reads LPSSPSSSNTVGVHSSSPSSTNSSSGST. Positions 81-102 are enriched in polar residues; the sequence is EPTNQNLSISNGAQPGQSSMQK. The stretch at 672–713 forms a coiled coil; that stretch reads MKDECSMLKLQLKEKDELISQLQEELEKVQHLQKAFASRVDK.

Belongs to the CCSER family.

The chain is Serine-rich coiled-coil domain-containing protein 1 (CCSER1) from Bos taurus (Bovine).